We begin with the raw amino-acid sequence, 339 residues long: Bifunctional NMN adenylyltransferase/Nudix hydrolase (339 aa).

An NMN adenylyltransferase region spans residues 1–183; that stretch reads MQTKYQYGIY…RYIALCDEYQ (183 aa). The region spanning 199 to 335 is the Nudix hydrolase domain; sequence PTFITTDAVV…EDHFQIIQHF (137 aa). Positions 233 to 254 match the Nudix box motif; the sequence is GFIKQNETLVEGMLRELKEETR.

This sequence in the N-terminal section; belongs to the archaeal NMN adenylyltransferase family. Mg(2+) serves as cofactor. Mn(2+) is required as a cofactor.

Its subcellular location is the cytoplasm. It catalyses the reaction beta-nicotinamide D-ribonucleotide + ATP + H(+) = diphosphate + NAD(+). It functions in the pathway cofactor biosynthesis; NAD(+) biosynthesis; NAD(+) from nicotinamide D-ribonucleotide: step 1/1. In terms of biological role, the Nudix hydrolase domain is active on ADP-ribose, (2')-phospho-ADP-ribose, IDP-ribose and NADPH. In Synechocystis sp. (strain ATCC 27184 / PCC 6803 / Kazusa), this protein is Bifunctional NMN adenylyltransferase/Nudix hydrolase.